The primary structure comprises 550 residues: Tether containing UBX domain for GLUT4 (550 aa).

Residue alanine 2 is modified to N-acetylalanine. A disordered region spans residues 185 to 320 (AVRSKAPGSP…EPPVDRDPVV (136 aa)). The residue at position 193 (serine 193) is a Phosphoserine. Over residues 193–206 (SPVSSLSADQASSS) the composition is skewed to low complexity. Basic and acidic residues predominate over residues 217-226 (SRGDLNHEGD). Over residues 242–252 (DAQTKQSTSEP) the composition is skewed to polar residues. Residues 313 to 376 (PVDRDPVVYH…LVTKAFREAQ (64 aa)) are interaction with GLUT4. The 77-residue stretch at 382–458 (ERYPKVALRV…NLFPAALVHF (77 aa)) folds into the UBX domain. The residue at position 496 (serine 496) is a Phosphoserine. The interval 496–550 (SPPLLPAPDPVSLESEPIAEDGALGPPEPIQGTAQPVKRSLGKVPKWLKLPASKR) is disordered.

Interacts with VCP. Interacts with VCPKMT. Interacts with GLUT4. In terms of tissue distribution, ubiquitous.

Its subcellular location is the endomembrane system. The protein localises to the endoplasmic reticulum-Golgi intermediate compartment membrane. It localises to the cytoplasm. It is found in the nucleus. In terms of biological role, enhances VCP methylation catalyzed by VCPKMT. Tethering protein that sequesters GLUT4-containing vesicles in the cytoplasm in the absence of insulin. Modulates the amount of GLUT4 that is available at the cell surface. This is Tether containing UBX domain for GLUT4 (Aspscr1) from Mus musculus (Mouse).